We begin with the raw amino-acid sequence, 150 residues long: 3-dehydroquinate dehydratase (150 aa).

Tyrosine 26 serves as the catalytic Proton acceptor. Positions 77, 83, and 90 each coordinate substrate. Histidine 103 serves as the catalytic Proton donor. Residues 104–105 (LS) and arginine 114 contribute to the substrate site.

Belongs to the type-II 3-dehydroquinase family. In terms of assembly, homododecamer.

The catalysed reaction is 3-dehydroquinate = 3-dehydroshikimate + H2O. Its pathway is metabolic intermediate biosynthesis; chorismate biosynthesis; chorismate from D-erythrose 4-phosphate and phosphoenolpyruvate: step 3/7. In terms of biological role, catalyzes a trans-dehydration via an enolate intermediate. The protein is 3-dehydroquinate dehydratase of Photobacterium profundum (strain SS9).